The primary structure comprises 349 residues: Cobalt-precorrin-5B C(1)-methyltransferase (349 aa).

The protein belongs to the CbiD family.

The catalysed reaction is Co-precorrin-5B + S-adenosyl-L-methionine = Co-precorrin-6A + S-adenosyl-L-homocysteine. It functions in the pathway cofactor biosynthesis; adenosylcobalamin biosynthesis; cob(II)yrinate a,c-diamide from sirohydrochlorin (anaerobic route): step 6/10. In terms of biological role, catalyzes the methylation of C-1 in cobalt-precorrin-5B to form cobalt-precorrin-6A. This is Cobalt-precorrin-5B C(1)-methyltransferase from Saccharolobus islandicus (strain Y.N.15.51 / Yellowstone #2) (Sulfolobus islandicus).